Reading from the N-terminus, the 195-residue chain is Pyridoxal 5'-phosphate synthase subunit PdxT (195 aa).

46–48 serves as a coordination point for L-glutamine; it reads GES. The Nucleophile role is filled by cysteine 78. L-glutamine contacts are provided by residues arginine 107 and 135 to 136; that span reads IR. Catalysis depends on charge relay system residues histidine 172 and glutamate 174.

This sequence belongs to the glutaminase PdxT/SNO family. As to quaternary structure, in the presence of PdxS, forms a dodecamer of heterodimers. Only shows activity in the heterodimer.

It catalyses the reaction aldehydo-D-ribose 5-phosphate + D-glyceraldehyde 3-phosphate + L-glutamine = pyridoxal 5'-phosphate + L-glutamate + phosphate + 3 H2O + H(+). The catalysed reaction is L-glutamine + H2O = L-glutamate + NH4(+). It functions in the pathway cofactor biosynthesis; pyridoxal 5'-phosphate biosynthesis. Catalyzes the hydrolysis of glutamine to glutamate and ammonia as part of the biosynthesis of pyridoxal 5'-phosphate. The resulting ammonia molecule is channeled to the active site of PdxS. The chain is Pyridoxal 5'-phosphate synthase subunit PdxT from Corynebacterium jeikeium (strain K411).